We begin with the raw amino-acid sequence, 686 residues long: DNA ligase (686 aa).

NAD(+)-binding positions include 34–38 (DAEYD), 83–84 (SI), and E120. K122 acts as the N6-AMP-lysine intermediate in catalysis. NAD(+)-binding residues include R143, E180, K298, and K322. Positions 420, 423, 438, and 444 each coordinate Zn(2+). Residues 603-686 (QSGGILSGKT…ALLGSNKKNG (84 aa)) enclose the BRCT domain.

This sequence belongs to the NAD-dependent DNA ligase family. LigA subfamily. Mg(2+) serves as cofactor. Mn(2+) is required as a cofactor.

The catalysed reaction is NAD(+) + (deoxyribonucleotide)n-3'-hydroxyl + 5'-phospho-(deoxyribonucleotide)m = (deoxyribonucleotide)n+m + AMP + beta-nicotinamide D-nucleotide.. Its function is as follows. DNA ligase that catalyzes the formation of phosphodiester linkages between 5'-phosphoryl and 3'-hydroxyl groups in double-stranded DNA using NAD as a coenzyme and as the energy source for the reaction. It is essential for DNA replication and repair of damaged DNA. This is DNA ligase from Thiobacillus denitrificans (strain ATCC 25259 / T1).